The chain runs to 263 residues: MYLNNNNNMKYYINSPLEQFEIRDLLGLTSPMMDFSFINITNFGLYTMITLLVILTMNLMTNNYNKLVGSNWYLSQEMIYDTIMNMVKTQIGGKVWGYYFPLVYTFFITIFTMNLISMIPYSFAMTSHVVFVVSMSMIIWLGTTIIGFYTHGLKFFGLFLPTGTPLILVPLLVSIELLSYFARTISLGLRLSANIMAGHLLIVILGGLLFNLMAMNILTFLLGFLPMIAILGIVCLEFAITIIQAYVWCILMSSYLKDTIYLH.

Positions 1 to 14 (MYLNNNNNMKYYIN) are cleaved as a propeptide — removed in mature form. 6 helical membrane passes run 35–57 (FSFI…ILTM), 95–117 (VWGY…NLIS), 129–151 (VVFV…FYTH), 156–178 (FGLF…IELL), 191–213 (LSAN…FNLM), and 228–250 (IAIL…VWCI).

Belongs to the ATPase A chain family. F-type ATPases have 2 components, CF(1) - the catalytic core - and CF(0) - the membrane proton channel. In yeast, the dimeric form of ATP synthase consists of 18 polypeptides: alpha, beta, gamma, delta, epsilon, 4 (B), 5 (OSCP), 6 (A), 8, 9 (C), d, E (Tim11), f, g, h, i, j and k.

Its subcellular location is the mitochondrion inner membrane. Mitochondrial membrane ATP synthase (F(1)F(0) ATP synthase or Complex V) produces ATP from ADP in the presence of a proton gradient across the membrane which is generated by electron transport complexes of the respiratory chain. F-type ATPases consist of two structural domains, F(1) - containing the extramembraneous catalytic core and F(0) - containing the membrane proton channel, linked together by a central stalk and a peripheral stalk. During catalysis, ATP synthesis in the catalytic domain of F(1) is coupled via a rotary mechanism of the central stalk subunits to proton translocation. Key component of the proton channel; it may play a direct role in the translocation of protons across the membrane. This Eremothecium gossypii (strain ATCC 10895 / CBS 109.51 / FGSC 9923 / NRRL Y-1056) (Yeast) protein is ATP synthase subunit a (ATP6).